Reading from the N-terminus, the 375-residue chain is 4-hydroxy-3-methylbut-2-en-1-yl diphosphate synthase (flavodoxin) (375 aa).

[4Fe-4S] cluster is bound by residues C270, C273, C305, and E312.

The protein belongs to the IspG family. [4Fe-4S] cluster is required as a cofactor.

It carries out the reaction (2E)-4-hydroxy-3-methylbut-2-enyl diphosphate + oxidized [flavodoxin] + H2O + 2 H(+) = 2-C-methyl-D-erythritol 2,4-cyclic diphosphate + reduced [flavodoxin]. It participates in isoprenoid biosynthesis; isopentenyl diphosphate biosynthesis via DXP pathway; isopentenyl diphosphate from 1-deoxy-D-xylulose 5-phosphate: step 5/6. Functionally, converts 2C-methyl-D-erythritol 2,4-cyclodiphosphate (ME-2,4cPP) into 1-hydroxy-2-methyl-2-(E)-butenyl 4-diphosphate. The protein is 4-hydroxy-3-methylbut-2-en-1-yl diphosphate synthase (flavodoxin) of Shigella flexneri serotype 5b (strain 8401).